Consider the following 303-residue polypeptide: Pantothenate synthetase (303 aa).

An ATP-binding site is contributed by 30–37 (MGYLHAGH). His-37 (proton donor) is an active-site residue. Residue Gln-61 coordinates (R)-pantoate. Residue Gln-61 coordinates beta-alanine. 147-150 (GAKD) provides a ligand contact to ATP. Gln-153 provides a ligand contact to (R)-pantoate. ATP-binding positions include Val-176 and 184–187 (LSSR).

Belongs to the pantothenate synthetase family. In terms of assembly, homodimer.

It localises to the cytoplasm. The enzyme catalyses (R)-pantoate + beta-alanine + ATP = (R)-pantothenate + AMP + diphosphate + H(+). Its pathway is cofactor biosynthesis; (R)-pantothenate biosynthesis; (R)-pantothenate from (R)-pantoate and beta-alanine: step 1/1. Its function is as follows. Catalyzes the condensation of pantoate with beta-alanine in an ATP-dependent reaction via a pantoyl-adenylate intermediate. This Rhizobium johnstonii (strain DSM 114642 / LMG 32736 / 3841) (Rhizobium leguminosarum bv. viciae) protein is Pantothenate synthetase.